The sequence spans 162 residues: UPF0262 protein AZC_3148 (162 aa).

Belongs to the UPF0262 family.

In Azorhizobium caulinodans (strain ATCC 43989 / DSM 5975 / JCM 20966 / LMG 6465 / NBRC 14845 / NCIMB 13405 / ORS 571), this protein is UPF0262 protein AZC_3148.